The following is a 180-amino-acid chain: Large ribosomal subunit protein uL6 (180 aa).

The protein belongs to the universal ribosomal protein uL6 family. Part of the 50S ribosomal subunit.

Its function is as follows. This protein binds to the 23S rRNA, and is important in its secondary structure. It is located near the subunit interface in the base of the L7/L12 stalk, and near the tRNA binding site of the peptidyltransferase center. This is Large ribosomal subunit protein uL6 from Thermodesulfovibrio yellowstonii (strain ATCC 51303 / DSM 11347 / YP87).